Here is a 342-residue protein sequence, read N- to C-terminus: Biotin synthase (342 aa).

Positions Gly-38–Ser-262 constitute a Radical SAM core domain. Residues Cys-53, Cys-57, and Cys-60 each coordinate [4Fe-4S] cluster. The [2Fe-2S] cluster site is built by Cys-97, Cys-128, Cys-188, and Arg-260.

It belongs to the radical SAM superfamily. Biotin synthase family. As to quaternary structure, homodimer. It depends on [4Fe-4S] cluster as a cofactor. Requires [2Fe-2S] cluster as cofactor.

It catalyses the reaction (4R,5S)-dethiobiotin + (sulfur carrier)-SH + 2 reduced [2Fe-2S]-[ferredoxin] + 2 S-adenosyl-L-methionine = (sulfur carrier)-H + biotin + 2 5'-deoxyadenosine + 2 L-methionine + 2 oxidized [2Fe-2S]-[ferredoxin]. Its pathway is cofactor biosynthesis; biotin biosynthesis; biotin from 7,8-diaminononanoate: step 2/2. Functionally, catalyzes the conversion of dethiobiotin (DTB) to biotin by the insertion of a sulfur atom into dethiobiotin via a radical-based mechanism. The sequence is that of Biotin synthase from Baumannia cicadellinicola subsp. Homalodisca coagulata.